The chain runs to 220 residues: Adenylate kinase (220 aa).

Gly12–Thr17 is a binding site for ATP. Residues Ser32–Val62 are NMP. AMP-binding positions include Thr33, Arg38, Glu60–Val62, Gly88–Arg91, and Gln95. The interval Ala129–Asp166 is LID. Arg130 is an ATP binding site. Positions 133 and 136 each coordinate Zn(2+). Ile139–Tyr140 serves as a coordination point for ATP. Positions 153 and 156 each coordinate Zn(2+). Arg163 and Arg174 together coordinate AMP. Position 202 (Ile202) interacts with ATP.

It belongs to the adenylate kinase family. Monomer.

It localises to the cytoplasm. It catalyses the reaction AMP + ATP = 2 ADP. It participates in purine metabolism; AMP biosynthesis via salvage pathway; AMP from ADP: step 1/1. Its function is as follows. Catalyzes the reversible transfer of the terminal phosphate group between ATP and AMP. Plays an important role in cellular energy homeostasis and in adenine nucleotide metabolism. This is Adenylate kinase from Thermotoga maritima (strain ATCC 43589 / DSM 3109 / JCM 10099 / NBRC 100826 / MSB8).